A 322-amino-acid chain; its full sequence is 4-hydroxy-3-methylbut-2-enyl diphosphate reductase (322 aa).

Cys-15 is a binding site for [4Fe-4S] cluster. Residues His-44 and His-77 each contribute to the (2E)-4-hydroxy-3-methylbut-2-enyl diphosphate site. His-44 and His-77 together coordinate dimethylallyl diphosphate. Positions 44 and 77 each coordinate isopentenyl diphosphate. Residue Cys-99 coordinates [4Fe-4S] cluster. His-127 is a binding site for (2E)-4-hydroxy-3-methylbut-2-enyl diphosphate. Residue His-127 coordinates dimethylallyl diphosphate. His-127 contacts isopentenyl diphosphate. The Proton donor role is filled by Glu-129. Residue Thr-168 coordinates (2E)-4-hydroxy-3-methylbut-2-enyl diphosphate. Residue Cys-198 coordinates [4Fe-4S] cluster. (2E)-4-hydroxy-3-methylbut-2-enyl diphosphate-binding residues include Ser-226, Ser-227, Asn-228, and Ser-270. 4 residues coordinate dimethylallyl diphosphate: Ser-226, Ser-227, Asn-228, and Ser-270. Residues Ser-226, Ser-227, Asn-228, and Ser-270 each contribute to the isopentenyl diphosphate site.

It belongs to the IspH family. Requires [4Fe-4S] cluster as cofactor.

It catalyses the reaction isopentenyl diphosphate + 2 oxidized [2Fe-2S]-[ferredoxin] + H2O = (2E)-4-hydroxy-3-methylbut-2-enyl diphosphate + 2 reduced [2Fe-2S]-[ferredoxin] + 2 H(+). The enzyme catalyses dimethylallyl diphosphate + 2 oxidized [2Fe-2S]-[ferredoxin] + H2O = (2E)-4-hydroxy-3-methylbut-2-enyl diphosphate + 2 reduced [2Fe-2S]-[ferredoxin] + 2 H(+). It functions in the pathway isoprenoid biosynthesis; dimethylallyl diphosphate biosynthesis; dimethylallyl diphosphate from (2E)-4-hydroxy-3-methylbutenyl diphosphate: step 1/1. The protein operates within isoprenoid biosynthesis; isopentenyl diphosphate biosynthesis via DXP pathway; isopentenyl diphosphate from 1-deoxy-D-xylulose 5-phosphate: step 6/6. Functionally, catalyzes the conversion of 1-hydroxy-2-methyl-2-(E)-butenyl 4-diphosphate (HMBPP) into a mixture of isopentenyl diphosphate (IPP) and dimethylallyl diphosphate (DMAPP). Acts in the terminal step of the DOXP/MEP pathway for isoprenoid precursor biosynthesis. The protein is 4-hydroxy-3-methylbut-2-enyl diphosphate reductase of Neisseria meningitidis serogroup C (strain 053442).